A 298-amino-acid chain; its full sequence is Probable prolyl 4-hydroxylase 4 (298 aa).

Over 1–6 the chain is Cytoplasmic; it reads MARRGL. The helical; Signal-anchor for type II membrane protein transmembrane segment at 7-25 threads the bilayer; the sequence is LISFFAIFSVLLQSSTSLI. At 26–298 the chain is on the lumenal side; the sequence is SSSSVFVNPS…GYCRRSCKAC (273 aa). An N-linked (GlcNAc...) asparagine glycan is attached at asparagine 77. The Fe2OG dioxygenase domain maps to 120 to 245; sequence NGEDIQVLRY…KWSATKWIHV (126 aa). The Fe cation site is built by histidine 138 and aspartate 140. The N-linked (GlcNAc...) asparagine glycan is linked to asparagine 164. Histidine 226 lines the Fe cation pocket. 2-oxoglutarate is bound at residue lysine 236. N-linked (GlcNAc...) asparagine glycosylation is found at asparagine 257 and asparagine 262. The 41-residue stretch at 258–298 folds into the ShKT domain; it reads CTDMNESCERWAVLGECTKNPEYMVGTTELPGYCRRSCKAC. 3 disulfides stabilise this stretch: cysteine 258/cysteine 298, cysteine 265/cysteine 291, and cysteine 274/cysteine 295.

Belongs to the P4HA family. It depends on Fe(2+) as a cofactor. The cofactor is L-ascorbate.

The protein localises to the endoplasmic reticulum membrane. The catalysed reaction is L-prolyl-[collagen] + 2-oxoglutarate + O2 = trans-4-hydroxy-L-prolyl-[collagen] + succinate + CO2. Catalyzes the post-translational formation of 4-hydroxyproline in -Xaa-Pro-Gly- sequences in proline-rich peptide sequences of plant glycoproteins and other proteins. Hydroxyprolines are important constituent of many plant cell wall glycoproteins such as extensins, hydroxyproline-rich glycoproteins, lectins and arabinogalactan proteins. The polypeptide is Probable prolyl 4-hydroxylase 4 (Arabidopsis thaliana (Mouse-ear cress)).